We begin with the raw amino-acid sequence, 573 residues long: MLGSLGLWALLPTAVEAPPNRRTCVFFEAPGVRGSTKTLGELLDTGTELPRAIRCLYSRCCFGIWNLTQDRAQVEMQGCRDSDEPGCESLHCDPSPRAHPSPGSTLFTCSCGTDFCNANYSHLPPPGSPGTPGSQGPQAAPGESIWMALVLLGLFLLLLLLLGSIILALLQRKNYRVRGEPVPEPRPDSGRDWSVELQELPELCFSQVIREGGHAVVWAGQLQGKLVAIKAFPPRSVAQFQAERALYELPGLQHDHIVRFITASRGGPGRLLSGPLLVLELHPKGSLCHYLTQYTSDWGSSLRMALSLAQGLAFLHEERWQNGQYKPGIAHRDLSSQNVLIREDGSCAIGDLGLALVLPGLTQPPAWTPTQPQGPAAIMEAGTQRYMAPELLDKTLDLQDWGMALRRADIYSLALLLWEILSRCPDLRPDSSPPPFQLAYEAELGNTPTSDELWALAVQERRRPYIPSTWRCFATDPDGLRELLEDCWDADPEARLTAECVQQRLAALAHPQESHPFPESCPRGCPPLCPEDCTSIPAPTILPCRPQRSACHFSVQQGPCSRNPQPACTLSPV.

The N-terminal stretch at Met-1–Ala-17 is a signal peptide. The Extracellular portion of the chain corresponds to Pro-18–Leu-149. 2 cysteine pairs are disulfide-bonded: Cys-55–Cys-79 and Cys-92–Cys-109. An N-linked (GlcNAc...) asparagine glycan is attached at Asn-66. The N-linked (GlcNAc...) asparagine glycan is linked to Asn-119. Residues Val-150 to Leu-170 form a helical membrane-spanning segment. Over Gln-171–Val-573 the chain is Cytoplasmic. One can recognise a Protein kinase domain in the interval Leu-203–Pro-518. Residues Ile-209–Val-217 and Lys-230 contribute to the ATP site. Residue Asp-333 is the Proton acceptor of the active site.

It belongs to the protein kinase superfamily. TKL Ser/Thr protein kinase family. TGFB receptor subfamily. As to quaternary structure, interacts with type I receptor ACVR1. Mg(2+) is required as a cofactor. Mn(2+) serves as cofactor.

The protein resides in the membrane. It catalyses the reaction L-threonyl-[receptor-protein] + ATP = O-phospho-L-threonyl-[receptor-protein] + ADP + H(+). It carries out the reaction L-seryl-[receptor-protein] + ATP = O-phospho-L-seryl-[receptor-protein] + ADP + H(+). On ligand binding, forms a receptor complex consisting of two type II and two type I transmembrane serine/threonine kinases. Type II receptors phosphorylate and activate type I receptors which autophosphorylate, then bind and activate SMAD transcriptional regulators. Receptor for anti-Muellerian hormone. This chain is Anti-Muellerian hormone type-2 receptor (AMHR2), found in Homo sapiens (Human).